Here is a 693-residue protein sequence, read N- to C-terminus: Polyribonucleotide nucleotidyltransferase (693 aa).

Residues Asp486 and Asp492 each coordinate Mg(2+). One can recognise a KH domain in the interval 553 to 612 (PRFSSMRIDTEKIKDVIGKGGATIRSITEQTGTTIEIEDDGSVKIAATDKAAAANARRLI). The region spanning 622-690 (GRIYDAKVTK…RQGRVRLSIK (69 aa)) is the S1 motif domain.

Belongs to the polyribonucleotide nucleotidyltransferase family. As to quaternary structure, component of the RNA degradosome, which is a multiprotein complex involved in RNA processing and mRNA degradation. Requires Mg(2+) as cofactor.

It is found in the cytoplasm. The enzyme catalyses RNA(n+1) + phosphate = RNA(n) + a ribonucleoside 5'-diphosphate. In terms of biological role, involved in mRNA degradation. Catalyzes the phosphorolysis of single-stranded polyribonucleotides processively in the 3'- to 5'-direction. The polypeptide is Polyribonucleotide nucleotidyltransferase (Dichelobacter nodosus (strain VCS1703A)).